We begin with the raw amino-acid sequence, 452 residues long: Tripartite motif-containing protein 49 (452 aa).

Residues 15 to 56 (CPLCMNYFIDPVTIDCGHSFCRPCFYLNWQDIPFLVQCSECT) form an RING-type zinc finger. A B box-type zinc finger spans residues 88–129 (SEEQMCGTHRETKKIFCEVDRSLLCLLCSSSQEHRYHRHRPI). 4 residues coordinate Zn(2+): Cys-93, His-96, Cys-115, and His-121. In terms of domain architecture, B30.2/SPRY spans 269-452 (ELSAGPITGL…LRPIFCCIHF (184 aa)).

This sequence belongs to the TRIM/RBCC family. In terms of tissue distribution, preferentially expressed in testis.

In Homo sapiens (Human), this protein is Tripartite motif-containing protein 49 (TRIM49).